Here is a 400-residue protein sequence, read N- to C-terminus: Na(+)/H(+) antiporter NhaA (400 aa).

The next 11 helical transmembrane spans lie at phenylalanine 10–isoleucine 30, alanine 60–leucine 80, isoleucine 95–phenylalanine 115, glycine 126–glycine 146, valine 155–phenylalanine 175, asparagine 178–leucine 198, valine 218–isoleucine 238, glycine 265–glycine 285, isoleucine 295–phenylalanine 315, alanine 334–alanine 354, and leucine 364–threonine 384.

The protein belongs to the NhaA Na(+)/H(+) (TC 2.A.33) antiporter family.

It localises to the cell inner membrane. The catalysed reaction is Na(+)(in) + 2 H(+)(out) = Na(+)(out) + 2 H(+)(in). In terms of biological role, na(+)/H(+) antiporter that extrudes sodium in exchange for external protons. The protein is Na(+)/H(+) antiporter NhaA of Psychrobacter cryohalolentis (strain ATCC BAA-1226 / DSM 17306 / VKM B-2378 / K5).